The sequence spans 269 residues: 4-hydroxy-tetrahydrodipicolinate reductase (269 aa).

NAD(+) is bound at residue 11–16; that stretch reads GPIGRM. Position 39 (lysine 39) interacts with NADP(+). Residues 101 to 103 and 125 to 128 each bind NAD(+); these read GTT and ASNF. The Proton donor/acceptor role is filled by histidine 158. Histidine 159 provides a ligand contact to (S)-2,3,4,5-tetrahydrodipicolinate. The Proton donor role is filled by lysine 162. 168-169 is a binding site for (S)-2,3,4,5-tetrahydrodipicolinate; sequence GT.

It belongs to the DapB family. In terms of assembly, homotetramer.

The protein resides in the cytoplasm. It carries out the reaction (S)-2,3,4,5-tetrahydrodipicolinate + NAD(+) + H2O = (2S,4S)-4-hydroxy-2,3,4,5-tetrahydrodipicolinate + NADH + H(+). The enzyme catalyses (S)-2,3,4,5-tetrahydrodipicolinate + NADP(+) + H2O = (2S,4S)-4-hydroxy-2,3,4,5-tetrahydrodipicolinate + NADPH + H(+). It functions in the pathway amino-acid biosynthesis; L-lysine biosynthesis via DAP pathway; (S)-tetrahydrodipicolinate from L-aspartate: step 4/4. Functionally, catalyzes the conversion of 4-hydroxy-tetrahydrodipicolinate (HTPA) to tetrahydrodipicolinate. This chain is 4-hydroxy-tetrahydrodipicolinate reductase, found in Buchnera aphidicola subsp. Acyrthosiphon pisum (strain APS) (Acyrthosiphon pisum symbiotic bacterium).